The following is a 200-amino-acid chain: Molybdopterin synthase catalytic subunit (200 aa).

A compositionally biased stretch (polar residues) spans 16–30 (KLPSSHQSVEDSASE). The segment at 16-43 (KLPSSHQSVEDSASEPSGYEAKDPPQDT) is disordered. Position 20 is a phosphoserine (S20). Residues 154 to 155 (HR), K170, and 177 to 179 (KKE) each bind substrate.

The protein belongs to the MoaE family. MOCS2B subfamily. Heterotetramer; composed of 2 small (MOCS2A) and 2 large (MOCS2B) subunits.

Its subcellular location is the cytoplasm. It localises to the cytosol. It catalyses the reaction 2 [molybdopterin-synthase sulfur-carrier protein]-C-terminal-Gly-aminoethanethioate + cyclic pyranopterin phosphate + H2O = molybdopterin + 2 [molybdopterin-synthase sulfur-carrier protein]-C-terminal Gly-Gly + 2 H(+). It functions in the pathway cofactor biosynthesis; molybdopterin biosynthesis. Its function is as follows. Catalytic subunit of the molybdopterin synthase complex, a complex that catalyzes the conversion of precursor Z into molybdopterin. Acts by mediating the incorporation of 2 sulfur atoms from thiocarboxylated MOCS2A into precursor Z to generate a dithiolene group. This Rattus norvegicus (Rat) protein is Molybdopterin synthase catalytic subunit.